Here is a 277-residue protein sequence, read N- to C-terminus: Bis(5'-nucleosyl)-tetraphosphatase, symmetrical (277 aa).

This sequence belongs to the Ap4A hydrolase family.

The enzyme catalyses P(1),P(4)-bis(5'-adenosyl) tetraphosphate + H2O = 2 ADP + 2 H(+). Hydrolyzes diadenosine 5',5'''-P1,P4-tetraphosphate to yield ADP. This is Bis(5'-nucleosyl)-tetraphosphatase, symmetrical from Bordetella pertussis (strain Tohama I / ATCC BAA-589 / NCTC 13251).